The following is a 564-amino-acid chain: Formate--tetrahydrofolate ligase (564 aa).

Residue 65-72 (TPLGEGKT) coordinates ATP.

This sequence belongs to the formate--tetrahydrofolate ligase family.

The enzyme catalyses (6S)-5,6,7,8-tetrahydrofolate + formate + ATP = (6R)-10-formyltetrahydrofolate + ADP + phosphate. The protein operates within one-carbon metabolism; tetrahydrofolate interconversion. The sequence is that of Formate--tetrahydrofolate ligase from Roseiflexus castenholzii (strain DSM 13941 / HLO8).